The chain runs to 70 residues: Mu-agatoxin-Ao1b (70 aa).

An N-terminal signal peptide occupies residues 1–20 (MKAIIFFCFLSVMVFIVAEA). The propeptide occupies 21–33 (SSLEALKIFEGER). 4 cysteine pairs are disulfide-bonded: Cys-35–Cys-50, Cys-42–Cys-55, Cys-49–Cys-65, and Cys-57–Cys-63. The residue at position 69 (Asn-69) is an Asparagine amide.

It belongs to the neurotoxin 07 (Beta/delta-agtx) family. 04 (aga-5) subfamily. Expressed by the venom gland.

The protein resides in the secreted. Its function is as follows. Insecticidal neurotoxin that modulates the insect Nav channel (DmNaV1/tipE (para/tipE)) in a unique manner, with both the activation and inactivation processes being affected. The voltage dependence of activation is shifted toward more hyperpolarized potentials (analogous to site 4 toxins) and a non-inactivating persistent sodium current is induced (site 3-like action). Interestingly, both effects take place in a voltage-dependent manner, producing a bell-shaped curve between -80 and 0 mV. This is Mu-agatoxin-Ao1b from Agelena orientalis (Funnel-web spider).